We begin with the raw amino-acid sequence, 159 residues long: Peptide deformylase (159 aa).

Residues Cys88 and His130 each coordinate Fe cation. The active site involves Glu131. Fe cation is bound at residue His134.

It belongs to the polypeptide deformylase family. Fe(2+) is required as a cofactor.

The enzyme catalyses N-terminal N-formyl-L-methionyl-[peptide] + H2O = N-terminal L-methionyl-[peptide] + formate. Removes the formyl group from the N-terminal Met of newly synthesized proteins. Requires at least a dipeptide for an efficient rate of reaction. N-terminal L-methionine is a prerequisite for activity but the enzyme has broad specificity at other positions. This Thermoanaerobacter pseudethanolicus (strain ATCC 33223 / 39E) (Clostridium thermohydrosulfuricum) protein is Peptide deformylase.